The primary structure comprises 371 residues: uncharacterized protein (371 aa).

One can recognise a 4Fe-4S ferredoxin-type domain in the interval 110–140 (MEKFIDFDRCNKCGECARKICKAKWTPLNYL).

This is an uncharacterized protein from Methanocaldococcus jannaschii (strain ATCC 43067 / DSM 2661 / JAL-1 / JCM 10045 / NBRC 100440) (Methanococcus jannaschii).